Consider the following 177-residue polypeptide: Transmembrane protein 190 (177 aa).

An N-terminal signal peptide occupies residues 1–21 (MLGCGIPALGLLLLLQGSADG). Over 22–81 (NGIQGFFYPWSCEGDIWDRESCGGQAAIDSPNLCLRLRCCYRNGVCYHQRPDENVRRKHM) the chain is Extracellular. The P-type domain maps to 31 to 71 (WSCEGDIWDRESCGGQAAIDSPNLCLRLRCCYRNGVCYHQR). 3 cysteine pairs are disulfide-bonded: Cys-33-Cys-61, Cys-43-Cys-60, and Cys-55-Cys-67. A helical transmembrane segment spans residues 82–102 (WALVWTCSGLLLLSCSICLFW). Over 103 to 177 (WAKRRDVLHM…EETEGEEEED (75 aa)) the chain is Cytoplasmic. Residues 131–177 (KHRGTKKTPSTGSVPVALSKESRDVEGGTEGEGTEEGEETEGEEEED) are disordered. Acidic residues predominate over residues 157–177 (GGTEGEGTEEGEETEGEEEED).

It localises to the membrane. This is Transmembrane protein 190 (TMEM190) from Homo sapiens (Human).